A 458-amino-acid polypeptide reads, in one-letter code: ATP synthase subunit beta (458 aa).

148 to 155 (GGAGVGKT) serves as a coordination point for ATP.

This sequence belongs to the ATPase alpha/beta chains family. As to quaternary structure, F-type ATPases have 2 components, CF(1) - the catalytic core - and CF(0) - the membrane proton channel. CF(1) has five subunits: alpha(3), beta(3), gamma(1), delta(1), epsilon(1). CF(0) has three main subunits: a(1), b(2) and c(9-12). The alpha and beta chains form an alternating ring which encloses part of the gamma chain. CF(1) is attached to CF(0) by a central stalk formed by the gamma and epsilon chains, while a peripheral stalk is formed by the delta and b chains.

It is found in the cell inner membrane. The enzyme catalyses ATP + H2O + 4 H(+)(in) = ADP + phosphate + 5 H(+)(out). Produces ATP from ADP in the presence of a proton gradient across the membrane. The catalytic sites are hosted primarily by the beta subunits. The protein is ATP synthase subunit beta of Francisella tularensis subsp. mediasiatica (strain FSC147).